A 227-amino-acid chain; its full sequence is Leucyl/phenylalanyl-tRNA--protein transferase (227 aa).

It belongs to the L/F-transferase family.

The protein resides in the cytoplasm. The catalysed reaction is N-terminal L-lysyl-[protein] + L-leucyl-tRNA(Leu) = N-terminal L-leucyl-L-lysyl-[protein] + tRNA(Leu) + H(+). It carries out the reaction N-terminal L-arginyl-[protein] + L-leucyl-tRNA(Leu) = N-terminal L-leucyl-L-arginyl-[protein] + tRNA(Leu) + H(+). The enzyme catalyses L-phenylalanyl-tRNA(Phe) + an N-terminal L-alpha-aminoacyl-[protein] = an N-terminal L-phenylalanyl-L-alpha-aminoacyl-[protein] + tRNA(Phe). Its function is as follows. Functions in the N-end rule pathway of protein degradation where it conjugates Leu, Phe and, less efficiently, Met from aminoacyl-tRNAs to the N-termini of proteins containing an N-terminal arginine or lysine. This chain is Leucyl/phenylalanyl-tRNA--protein transferase, found in Afipia carboxidovorans (strain ATCC 49405 / DSM 1227 / KCTC 32145 / OM5) (Oligotropha carboxidovorans).